A 355-amino-acid chain; its full sequence is Putative arylamide transporter (355 aa).

Transmembrane regions (helical) follow at residues 22 to 42, 44 to 64, 71 to 91, 92 to 112, 119 to 139, and 150 to 170; these read TVLWPITQTSVVAGLAWYLTH, VFNHPQAFFAPISAVVCMSAT, RAQQMIVGVALGIVLGAGVHA, LLGSGPIAMGVVVFIALSVAV, VAQGLMFINQAAVSAVLVLVF, and LFDALVGGGLAIVFSILLFPP.

The protein resides in the cell membrane. In terms of biological role, may be involved in the import of arylamide compounds. The protein is Putative arylamide transporter of Mycobacterium bovis (strain ATCC BAA-935 / AF2122/97).